Here is a 151-residue protein sequence, read N- to C-terminus: Protein ripply1 (151 aa).

Positions 57-60 match the WRPW motif motif; that stretch reads WRPW. A ripply homology domain region spans residues 96–131; the sequence is HPVRLFWPKSRSFDYLYSAGEILLQNFPVQATINLY. A disordered region spans residues 130–151; the sequence is LYEDSDSEEEEEDEEQEDEEEK. The span at 132-151 shows a compositional bias: acidic residues; that stretch reads EDSDSEEEEEDEEQEDEEEK.

Belongs to the ripply family.

It localises to the nucleus. In terms of biological role, plays a role in somitogenesis. Essential for transcriptional repression of the segmental patterning genes, thus terminating the segmentation program in the presomitic mesoderm, and also required for the maintenance of rostrocaudal polarity in somites. The sequence is that of Protein ripply1 from Homo sapiens (Human).